The chain runs to 722 residues: Methionine--tRNA ligase (722 aa).

A 'HIGH' region motif is present at residues 11–21; that stretch reads PYANGPIHAGH. Cys-143, Cys-146, Cys-156, and Cys-159 together coordinate Zn(2+). Positions 344–348 match the 'KMSKS' region motif; sequence KFSTS. Thr-347 contributes to the ATP binding site. One can recognise a tRNA-binding domain in the interval 622-722; it reads DFAKLDLRVG…KEVKLGAKVR (101 aa).

The protein belongs to the class-I aminoacyl-tRNA synthetase family. MetG type 1 subfamily. Homodimer. Zn(2+) serves as cofactor.

The protein localises to the cytoplasm. The catalysed reaction is tRNA(Met) + L-methionine + ATP = L-methionyl-tRNA(Met) + AMP + diphosphate. Functionally, is required not only for elongation of protein synthesis but also for the initiation of all mRNA translation through initiator tRNA(fMet) aminoacylation. This Pyrococcus abyssi (strain GE5 / Orsay) protein is Methionine--tRNA ligase.